A 362-amino-acid polypeptide reads, in one-letter code: Resuscitation-promoting factor RpfB (362 aa).

The N-terminal stretch at 1–23 (MLRLVVGALLLVLAFAGGYAVAA) is a signal peptide. Cys24 carries the N-palmitoyl cysteine lipid modification. The S-diacylglycerol cysteine moiety is linked to residue Cys24. The region spanning 192–272 (VTRNRIKKVT…EAVVRVGTKP (81 aa)) is the G5 domain. A disulfide bridge links Cys291 with Cys355.

The protein belongs to the transglycosylase family. Rpf subfamily.

It is found in the cell membrane. Functionally, factor that stimulates resuscitation of dormant cells. Has peptidoglycan (PG) hydrolytic activity. Active in the pM concentration range. Has little to no effect on actively-growing cells. PG fragments could either directly activate the resuscitation pathway of dormant bacteria or serve as a substrate for endogenous Rpf, resulting in low molecular weight products with resuscitation activity. Plays a role in reactivating bacteria from chronic tuberculosis (TB) in mice. The protein is Resuscitation-promoting factor RpfB (rpfB) of Mycobacterium tuberculosis (strain ATCC 35801 / TMC 107 / Erdman).